Reading from the N-terminus, the 570-residue chain is Trans-cinnamate:CoA ligase, peroxisomal (570 aa).

The Microbody targeting signal motif lies at 568-570 (ARL).

Belongs to the ATP-dependent AMP-binding enzyme family. Monomer. It depends on K(+) as a cofactor. Mostly expressed in flower organs, with highest levels in corollas and petal limbs, and, to a lesser extent, in petal tubes, sepals, pistils, stamen, stigma, anthers and ovaries. Also present at low levels in leaves, stems and roots.

The protein resides in the peroxisome. The catalysed reaction is (E)-4-coumarate + ATP + CoA = (E)-4-coumaroyl-CoA + AMP + diphosphate. It carries out the reaction (E)-caffeate + ATP + CoA = (E)-caffeoyl-CoA + AMP + diphosphate. It catalyses the reaction (E)-cinnamate + ATP + CoA = (E)-cinnamoyl-CoA + AMP + diphosphate. It participates in phenylpropanoid metabolism; trans-cinnamate biosynthesis. The protein operates within phytoalexin biosynthesis; 3,4',5-trihydroxystilbene biosynthesis; 3,4',5-trihydroxystilbene from trans-4-coumarate: step 1/2. Its function is as follows. Involved in the biosynthesis of floral volatile benzenoid/phenylpropanoid (FVBP) scent (e.g. benzylbenzoate, phenylethylbenzoate, and methylbenzoate). Catalyzes the formation of CoA esters of cinnamic acid, and, with lower efficiency, of 4-coumaric acid and caffeic acid. The chain is Trans-cinnamate:CoA ligase, peroxisomal from Petunia hybrida (Petunia).